A 486-amino-acid chain; its full sequence is Ribulose bisphosphate carboxylase large chain (486 aa).

Substrate is bound by residues Asn-126 and Thr-176. Catalysis depends on Lys-178, which acts as the Proton acceptor. Substrate is bound at residue Lys-180. Mg(2+)-binding residues include Lys-204, Asp-206, and Glu-207. N6-carboxylysine is present on Lys-204. His-296 (proton acceptor) is an active-site residue. 3 residues coordinate substrate: Arg-297, His-329, and Ser-381.

This sequence belongs to the RuBisCO large chain family. Type I subfamily. Heterohexadecamer of 8 large chains and 8 small chains. Requires Mg(2+) as cofactor.

The catalysed reaction is 2 (2R)-3-phosphoglycerate + 2 H(+) = D-ribulose 1,5-bisphosphate + CO2 + H2O. It carries out the reaction D-ribulose 1,5-bisphosphate + O2 = 2-phosphoglycolate + (2R)-3-phosphoglycerate + 2 H(+). RuBisCO catalyzes two reactions: the carboxylation of D-ribulose 1,5-bisphosphate, the primary event in carbon dioxide fixation, as well as the oxidative fragmentation of the pentose substrate. Both reactions occur simultaneously and in competition at the same active site. The chain is Ribulose bisphosphate carboxylase large chain from Rhizobium meliloti (strain 1021) (Ensifer meliloti).